Reading from the N-terminus, the 314-residue chain is Ribonuclease Z (314 aa).

Residues histidine 62, histidine 64, aspartate 66, histidine 67, histidine 139, aspartate 210, and histidine 268 each contribute to the Zn(2+) site. The active-site Proton acceptor is aspartate 66.

It belongs to the RNase Z family. As to quaternary structure, homodimer. Requires Zn(2+) as cofactor.

It catalyses the reaction Endonucleolytic cleavage of RNA, removing extra 3' nucleotides from tRNA precursor, generating 3' termini of tRNAs. A 3'-hydroxy group is left at the tRNA terminus and a 5'-phosphoryl group is left at the trailer molecule.. Functionally, zinc phosphodiesterase, which displays some tRNA 3'-processing endonuclease activity. Probably involved in tRNA maturation, by removing a 3'-trailer from precursor tRNA. This Rippkaea orientalis (strain PCC 8801 / RF-1) (Cyanothece sp. (strain PCC 8801)) protein is Ribonuclease Z.